Here is a 272-residue protein sequence, read N- to C-terminus: Acetylglutamate kinase (272 aa).

Residues 46 to 47 (GA), Arg68, and Asn166 each bind substrate.

This sequence belongs to the acetylglutamate kinase family. ArgB subfamily.

It is found in the cytoplasm. It catalyses the reaction N-acetyl-L-glutamate + ATP = N-acetyl-L-glutamyl 5-phosphate + ADP. It functions in the pathway amino-acid biosynthesis; L-arginine biosynthesis; N(2)-acetyl-L-ornithine from L-glutamate: step 2/4. Catalyzes the ATP-dependent phosphorylation of N-acetyl-L-glutamate. This Dehalococcoides mccartyi (strain ATCC BAA-2100 / JCM 16839 / KCTC 5957 / BAV1) protein is Acetylglutamate kinase.